Here is a 258-residue protein sequence, read N- to C-terminus: Acyl-[acyl-carrier-protein]--UDP-N-acetylglucosamine O-acyltransferase (258 aa).

The protein belongs to the transferase hexapeptide repeat family. LpxA subfamily. In terms of assembly, homotrimer.

It is found in the cytoplasm. It carries out the reaction a (3R)-hydroxyacyl-[ACP] + UDP-N-acetyl-alpha-D-glucosamine = a UDP-3-O-[(3R)-3-hydroxyacyl]-N-acetyl-alpha-D-glucosamine + holo-[ACP]. Its pathway is glycolipid biosynthesis; lipid IV(A) biosynthesis; lipid IV(A) from (3R)-3-hydroxytetradecanoyl-[acyl-carrier-protein] and UDP-N-acetyl-alpha-D-glucosamine: step 1/6. Functionally, involved in the biosynthesis of lipid A, a phosphorylated glycolipid that anchors the lipopolysaccharide to the outer membrane of the cell. This Stutzerimonas stutzeri (strain A1501) (Pseudomonas stutzeri) protein is Acyl-[acyl-carrier-protein]--UDP-N-acetylglucosamine O-acyltransferase.